A 710-amino-acid polypeptide reads, in one-letter code: uncharacterized protein (710 aa).

The interval 1–20 (MKQRQARLIGTPSQTRRQQE) is disordered. Positions 13 to 42 (SQTRRQQELAEKLEKVKEVLEDEKKRQFNE) form a coiled coil.

It belongs to the IIV-6 268L family.

This is an uncharacterized protein from Invertebrate iridescent virus 6 (IIV-6).